A 248-amino-acid chain; its full sequence is 3-deoxy-manno-octulosonate cytidylyltransferase 2 (248 aa).

This sequence belongs to the KdsB family.

The protein localises to the cytoplasm. It catalyses the reaction 3-deoxy-alpha-D-manno-oct-2-ulosonate + CTP = CMP-3-deoxy-beta-D-manno-octulosonate + diphosphate. It functions in the pathway nucleotide-sugar biosynthesis; CMP-3-deoxy-D-manno-octulosonate biosynthesis; CMP-3-deoxy-D-manno-octulosonate from 3-deoxy-D-manno-octulosonate and CTP: step 1/1. Its pathway is bacterial outer membrane biogenesis; lipopolysaccharide biosynthesis. Activates KDO (a required 8-carbon sugar) for incorporation into bacterial lipopolysaccharide in Gram-negative bacteria. This chain is 3-deoxy-manno-octulosonate cytidylyltransferase 2, found in Hydrogenovibrio crunogenus (strain DSM 25203 / XCL-2) (Thiomicrospira crunogena).